The following is a 482-amino-acid chain: MREKLIFELSRKGRKGYSLSGNELPEQPLENIIPSKYLRTTPAELPEVAESEVVRHFVRLSNLNYHVDKNMYPLGSCTMKYNPKINDYTCDLPGFSALHPLQPGETTQGALQLMFELAEMLREIAGMAAVTLQPAAGAHGELTGILLIKKYHESIGSKRHKLLVVDSAHGTNPASAALAGYDIISVKGNADGRTDLDDLRSKLDGDVAALMLTNPNTIGLFETEILAISKMVHDNGSLLYMDGANMNALLGITRPGDMGFDVVHYNLHKTFAAPHGGGGPGSGPVGVSEKLIPFLLVPVIVKEGTTYKLSYDRPESIGRMMNFYGNFAVLVRAYTYIRMLGPDGLRRVSENAIINANYLLSLLLESYDLPYPKPVMHEFCLSGDRQKKAHGVKTLDIAKRLLDYGFHAPTIYFPLIVSEALMIEPTETESKETLDVFAQALLSIADEAANNPALVTSAPVTTPVKRLDDAMASRQLNICCSL.

Lys269 is subject to N6-(pyridoxal phosphate)lysine.

Belongs to the GcvP family. C-terminal subunit subfamily. The glycine cleavage system is composed of four proteins: P, T, L and H. In this organism, the P 'protein' is a heterodimer of two subunits. Requires pyridoxal 5'-phosphate as cofactor.

The catalysed reaction is N(6)-[(R)-lipoyl]-L-lysyl-[glycine-cleavage complex H protein] + glycine + H(+) = N(6)-[(R)-S(8)-aminomethyldihydrolipoyl]-L-lysyl-[glycine-cleavage complex H protein] + CO2. The glycine cleavage system catalyzes the degradation of glycine. The P protein binds the alpha-amino group of glycine through its pyridoxal phosphate cofactor; CO(2) is released and the remaining methylamine moiety is then transferred to the lipoamide cofactor of the H protein. This Pelodictyon phaeoclathratiforme (strain DSM 5477 / BU-1) protein is Probable glycine dehydrogenase (decarboxylating) subunit 2.